The following is a 282-amino-acid chain: Sulfur carrier protein FdhD (282 aa).

Cys-126 acts as the Cysteine persulfide intermediate in catalysis. 265 to 270 (FVRNNR) lines the Mo-bis(molybdopterin guanine dinucleotide) pocket.

This sequence belongs to the FdhD family.

It localises to the cytoplasm. Its function is as follows. Required for formate dehydrogenase (FDH) activity. Acts as a sulfur carrier protein that transfers sulfur from IscS to the molybdenum cofactor prior to its insertion into FDH. The sequence is that of Sulfur carrier protein FdhD from Thermoplasma acidophilum (strain ATCC 25905 / DSM 1728 / JCM 9062 / NBRC 15155 / AMRC-C165).